The primary structure comprises 362 residues: Chorismate synthase (362 aa).

Arg-46 lines the NADP(+) pocket. Residues 122-124, 238-239, Gly-278, 293-297, and Arg-319 each bind FMN; these read RSS, NA, and KPTPS.

Belongs to the chorismate synthase family. As to quaternary structure, homotetramer. Requires FMNH2 as cofactor.

It carries out the reaction 5-O-(1-carboxyvinyl)-3-phosphoshikimate = chorismate + phosphate. The protein operates within metabolic intermediate biosynthesis; chorismate biosynthesis; chorismate from D-erythrose 4-phosphate and phosphoenolpyruvate: step 7/7. Functionally, catalyzes the anti-1,4-elimination of the C-3 phosphate and the C-6 proR hydrogen from 5-enolpyruvylshikimate-3-phosphate (EPSP) to yield chorismate, which is the branch point compound that serves as the starting substrate for the three terminal pathways of aromatic amino acid biosynthesis. This reaction introduces a second double bond into the aromatic ring system. This is Chorismate synthase from Campylobacter jejuni subsp. jejuni serotype O:6 (strain 81116 / NCTC 11828).